The chain runs to 413 residues: Serine/threonine-protein phosphatase 7 (413 aa).

Cysteines 28 and 67 form a disulfide. Residues D84, H86, D113, and N145 each coordinate Mn(2+). The active-site Proton donor is H146. Mn(2+) is bound by residues H197 and H303. Residues 391 to 413 (NVIDSDDEMDKSAMDTNNEQPNS) are disordered. Polar residues predominate over residues 404-413 (MDTNNEQPNS).

This sequence belongs to the PPP phosphatase family. PP-7 subfamily. As to quaternary structure, monomer, homodimer, and heteromer. Interacts with calmodulin (CaM3 and CaM4) and HSFA1A/HSF1. It depends on Mn(2+) as a cofactor. As to expression, expressed in leaves, and, to a lower extent, in stems and flowers.

The protein localises to the nucleus. It is found in the nucleoplasm. It catalyses the reaction O-phospho-L-seryl-[protein] + H2O = L-seryl-[protein] + phosphate. The enzyme catalyses O-phospho-L-threonyl-[protein] + H2O = L-threonyl-[protein] + phosphate. With respect to regulation, inhibited by NaF and orthovanadate, as well as by divalent cations such as Ni(2+) and Zn(2+). Inhibited by polylysine with myelin basic protein as substrate, but activated by polylysine with pNPP as substrate. Reversibly regulated by redox agents. Inhibited by submillimolar Pi concentrations. Slightly repressed by calmodulin (CaM). Its function is as follows. Phosphatase active on para-nitrophenylphosphate (pNPP) and on various phosphoproteins such as myelin basic protein. Seems to act as a positive regulator of cryptochrome signaling involved in hypocotyl growth inhibition and cotyledon expansion under white and blue light conditions. Confers thermotolerance. Required for heat shock mediated-signaling pathway that leads to the expression of heat shock proteins (HSPs). This chain is Serine/threonine-protein phosphatase 7 (PP7), found in Arabidopsis thaliana (Mouse-ear cress).